Here is a 211-residue protein sequence, read N- to C-terminus: LexA repressor (211 aa).

A DNA-binding region (H-T-H motif) is located at residues 28 to 48; the sequence is VREVGEAVGLSSSSTIHGHIE. Residues Ser132 and Lys170 each act as for autocatalytic cleavage activity in the active site.

It belongs to the peptidase S24 family. Homodimer.

It catalyses the reaction Hydrolysis of Ala-|-Gly bond in repressor LexA.. Represses a number of genes involved in the response to DNA damage (SOS response), including recA and lexA. In the presence of single-stranded DNA, RecA interacts with LexA causing an autocatalytic cleavage which disrupts the DNA-binding part of LexA, leading to derepression of the SOS regulon and eventually DNA repair. The chain is LexA repressor from Leuconostoc citreum (strain KM20).